Here is a 249-residue protein sequence, read N- to C-terminus: Type III pantothenate kinase (249 aa).

Residue 6–13 (DCGNSFIK) coordinates ATP. Residues Tyr93 and 100 to 103 (GMDR) contribute to the substrate site. The active-site Proton acceptor is the Asp102. K(+) is bound at residue Asp122. Residue Thr125 participates in ATP binding. Thr181 provides a ligand contact to substrate.

It belongs to the type III pantothenate kinase family. In terms of assembly, homodimer. NH4(+) serves as cofactor. Requires K(+) as cofactor.

The protein localises to the cytoplasm. The catalysed reaction is (R)-pantothenate + ATP = (R)-4'-phosphopantothenate + ADP + H(+). The protein operates within cofactor biosynthesis; coenzyme A biosynthesis; CoA from (R)-pantothenate: step 1/5. Functionally, catalyzes the phosphorylation of pantothenate (Pan), the first step in CoA biosynthesis. This is Type III pantothenate kinase from Pseudomonas putida (strain ATCC 47054 / DSM 6125 / CFBP 8728 / NCIMB 11950 / KT2440).